A 399-amino-acid polypeptide reads, in one-letter code: Protein translocase subunit SecD (399 aa).

Transmembrane regions (helical) follow at residues 7-27 (IKTA…LTFP), 239-259 (VIGA…LGLV), 262-282 (IALL…NATL), 286-306 (GVAG…LIFA), 329-351 (ALRA…FYFG), and 357-381 (GFAV…RTLL).

Belongs to the SecD/SecF family. SecD subfamily. In terms of assembly, forms a complex with SecF. Part of the essential Sec protein translocation apparatus which comprises SecA, SecYEG and auxiliary proteins SecDF. Other proteins may also be involved.

The protein localises to the cell inner membrane. Functionally, part of the Sec protein translocase complex. Interacts with the SecYEG preprotein conducting channel. SecDF uses the proton motive force (PMF) to complete protein translocation after the ATP-dependent function of SecA. In Dictyoglomus turgidum (strain DSM 6724 / Z-1310), this protein is Protein translocase subunit SecD.